Reading from the N-terminus, the 312-residue chain is Olfactory receptor 6C2 (312 aa).

At M1–V23 the chain is on the extracellular side. N3 carries an N-linked (GlcNAc...) asparagine glycan. Residues L24–I44 traverse the membrane as a helical segment. At T45–H52 the chain is on the cytoplasmic side. A helical membrane pass occupies residues L53 to T73. Residues V74–S97 lie on the Extracellular side of the membrane. N-linked (GlcNAc...) asparagine glycosylation is present at N82. C95 and C187 are disulfide-bonded. Residues Q98–Y118 form a helical membrane-spanning segment. The Cytoplasmic portion of the chain corresponds to D119–R137. Residues V138–L158 traverse the membrane as a helical segment. The Extracellular segment spans residues S159–Q195. A helical membrane pass occupies residues M196–S215. Topologically, residues Y216–A235 are cytoplasmic. A helical membrane pass occupies residues F236–I256. The Extracellular portion of the chain corresponds to Y257 to N269. Residues K270–L290 traverse the membrane as a helical segment. Residues R291–K312 are Cytoplasmic-facing.

It belongs to the G-protein coupled receptor 1 family.

It is found in the cell membrane. Functionally, odorant receptor. This chain is Olfactory receptor 6C2 (OR6C2), found in Homo sapiens (Human).